The following is a 405-amino-acid chain: Plasma serine protease inhibitor (405 aa).

A signal peptide spans 1–19 (MRFFPILCLVLFISHGVAS). Positions 20-24 (RRHSH) are cleaved as a propeptide — removed in mature form. The N-linked (GlcNAc...) asparagine glycan is linked to Asn-247.

This sequence belongs to the serpin family. As to quaternary structure, forms protease inhibiting heterodimers in extracellular body fluids with serine proteases such as activated protein C/coagulation factor V/F5, acrosin/ACR, chymotrypsinogen B/CTRB1, prothrombin/F2, factor Xa/F10, factor XI/F11, kallikrein/KLKB1, tissue kallikrein, trypsin/PRSS1, prostate specific antigen/KLK3, tissue plasminogen activator/PLAT and urinary plasminogen activator/PLAU. Forms membrane-anchored serine proteases inhibiting heterodimers with TMPRSS7 and TMPRSS11E. Interacts with SEMG2. In terms of processing, N-glycosylated; glycans consist of a mixture of sialylated bi- (including sialyl-Lewis X epitopes), tri- and tetra-antennary complex-type chains; affects the maximal heparin- and thrombomodulin-enhanced rates of thrombin inhibition. O-glycosylated; further modified with 2 sialic acid residues. Proteolytically cleaved at the N-terminus; inhibits slightly the heparin- and thrombomodulin-enhanced rates of thrombin inhibition. Post-translationally, proteolytically cleaved. Inhibition of proteases is accompanied by formation of a stable enzyme-inhibitor complex and by degradation of the serpin to lower molecular weight derivatives. In terms of tissue distribution, not detected in blood plasma (at protein level). Expressed in testis, epididymis, seminal vesicles, prostate and ovaries.

It is found in the secreted. It localises to the extracellular space. Its inhibitory activity is greatly enhanced in the presence of glycosaminoglycans, heparin, thrombomodulin and phospholipids vesicles. Functionally, heparin-dependent serine protease inhibitor acting in body fluids and secretions. Inactivates serine proteases by binding irreversibly to their serine activation site. Involved in the regulation of intravascular and extravascular proteolytic activities. Plays hemostatic roles in the blood plasma. Acts as a procoagulant and pro-inflammatory factor by inhibiting the anticoagulant activated protein C factor as well as the generation of activated protein C factor by the thrombin/thrombomodulin complex. Acts as an anticoagulant factor by inhibiting blood coagulation factors like prothrombin, factor XI, factor Xa, plasma kallikrein and fibrinolytic enzymes such as tissue- and urinary-type plasminogen activators. In seminal plasma, inactivates several serine proteases implicated in the reproductive system. Inhibits the serpin acrosin; indirectly protects component of the male genital tract from being degraded by excessive released acrosin. Inhibits tissue- and urinary-type plasminogen activator, prostate-specific antigen and kallikrein activities; has a control on the sperm motility and fertilization. Inhibits the activated protein C-catalyzed degradation of SEMG1 and SEMG2; regulates the degradation of semenogelin during the process of transfer of spermatozoa from the male reproductive tract into the female tract. In urine, inhibits urinary-type plasminogen activator and kallikrein activities. Inactivates membrane-anchored serine proteases activities such as MPRSS7 and TMPRSS11E. Inhibits urinary-type plasminogen activator-dependent tumor cell invasion and metastasis. May also play a non-inhibitory role in seminal plasma and urine as a hydrophobic hormone carrier by its binding to retinoic acid. The chain is Plasma serine protease inhibitor (Serpina5) from Mus musculus (Mouse).